A 69-amino-acid polypeptide reads, in one-letter code: Parvalbumin beta 3 (69 aa).

Position 1 is an N-acetylalanine (Ala-1). An EF-hand domain is found at 24–59 (FNYKTFFKFFAIIDQDHSGFIEEEELKLFLQTFSAG). Ca(2+) is bound by residues Asp-37, Asp-39, Ser-41, Phe-43, Glu-45, and Glu-48.

This sequence belongs to the parvalbumin family.

In muscle, parvalbumin is thought to be involved in relaxation after contraction. It binds two calcium ions. This is Parvalbumin beta 3 from Merluccius polli (Benguela hake).